Reading from the N-terminus, the 344-residue chain is Heat-inducible transcription repressor HrcA (344 aa).

The protein belongs to the HrcA family.

In terms of biological role, negative regulator of class I heat shock genes (grpE-dnaK-dnaJ and groELS operons). Prevents heat-shock induction of these operons. The sequence is that of Heat-inducible transcription repressor HrcA from Streptococcus agalactiae serotype Ia (strain ATCC 27591 / A909 / CDC SS700).